Reading from the N-terminus, the 350-residue chain is 8-amino-7-oxononanoate synthase (350 aa).

Pyridoxal 5'-phosphate is bound at residue 77-78; it reads GY. Substrate is bound at residue His102. Residues Ser150, 175–178, and 204–207 each bind pyridoxal 5'-phosphate; these read DDAH and TLSK. An N6-(pyridoxal phosphate)lysine modification is found at Lys207. Thr316 contacts substrate.

The protein belongs to the class-II pyridoxal-phosphate-dependent aminotransferase family. BioF subfamily. In terms of assembly, homodimer. The cofactor is pyridoxal 5'-phosphate.

It catalyses the reaction 6-carboxyhexanoyl-[ACP] + L-alanine + H(+) = (8S)-8-amino-7-oxononanoate + holo-[ACP] + CO2. It participates in cofactor biosynthesis; biotin biosynthesis. Its function is as follows. Catalyzes the decarboxylative condensation of pimeloyl-[acyl-carrier protein] and L-alanine to produce 8-amino-7-oxononanoate (AON), [acyl-carrier protein], and carbon dioxide. The protein is 8-amino-7-oxononanoate synthase of Methylocella silvestris (strain DSM 15510 / CIP 108128 / LMG 27833 / NCIMB 13906 / BL2).